Reading from the N-terminus, the 429-residue chain is Glutamate-1-semialdehyde 2,1-aminomutase (429 aa).

Residue Lys267 is modified to N6-(pyridoxal phosphate)lysine.

This sequence belongs to the class-III pyridoxal-phosphate-dependent aminotransferase family. HemL subfamily. In terms of assembly, homodimer. It depends on pyridoxal 5'-phosphate as a cofactor.

Its subcellular location is the cytoplasm. It carries out the reaction (S)-4-amino-5-oxopentanoate = 5-aminolevulinate. The protein operates within porphyrin-containing compound metabolism; protoporphyrin-IX biosynthesis; 5-aminolevulinate from L-glutamyl-tRNA(Glu): step 2/2. This is Glutamate-1-semialdehyde 2,1-aminomutase from Xanthomonas campestris pv. campestris (strain 8004).